Consider the following 104-residue polypeptide: COX assembly mitochondrial protein 1 (104 aa).

In terms of domain architecture, CHCH spans 10–52; sequence QKQCADLIRALEECHKSFGKFFGECNTIKYELKACLTKDRNDK. 2 consecutive short sequence motifs (cx9C motif) follow at residues 13–23 and 34–44; these read CADLIRALEEC and CNTIKYELKAC. Intrachain disulfides connect Cys13/Cys44 and Cys23/Cys34.

This sequence belongs to the CMC family.

It localises to the mitochondrion inner membrane. Required for mitochondrial cytochrome c oxidase (COX) assembly and respiration. This is COX assembly mitochondrial protein 1 (cmc1) from Schizosaccharomyces pombe (strain 972 / ATCC 24843) (Fission yeast).